Here is a 550-residue protein sequence, read N- to C-terminus: Glucose-6-phosphate isomerase (550 aa).

The active-site Proton donor is the Glu-355. Residues His-386 and Lys-512 contribute to the active site.

It belongs to the GPI family.

The protein resides in the cytoplasm. The enzyme catalyses alpha-D-glucose 6-phosphate = beta-D-fructose 6-phosphate. Its pathway is carbohydrate biosynthesis; gluconeogenesis. The protein operates within carbohydrate degradation; glycolysis; D-glyceraldehyde 3-phosphate and glycerone phosphate from D-glucose: step 2/4. In terms of biological role, catalyzes the reversible isomerization of glucose-6-phosphate to fructose-6-phosphate. In Rhodococcus opacus (strain B4), this protein is Glucose-6-phosphate isomerase.